Here is a 391-residue protein sequence, read N- to C-terminus: Aspartate aminotransferase (391 aa).

L-aspartate contacts are provided by Gly-40 and Asn-176. Position 236 is an N6-(pyridoxal phosphate)lysine (Lys-236). L-aspartate is bound at residue Arg-366.

The protein belongs to the class-I pyridoxal-phosphate-dependent aminotransferase family. Homodimer. Pyridoxal 5'-phosphate is required as a cofactor.

Its subcellular location is the cytoplasm. It catalyses the reaction L-aspartate + 2-oxoglutarate = oxaloacetate + L-glutamate. The polypeptide is Aspartate aminotransferase (aspC) (Pyrococcus horikoshii (strain ATCC 700860 / DSM 12428 / JCM 9974 / NBRC 100139 / OT-3)).